A 281-amino-acid chain; its full sequence is Nucleotide-binding protein DNO_0399 (281 aa).

6–13 (GMSGAGKS) contacts ATP. 55 to 58 (DARN) is a binding site for GTP.

Belongs to the RapZ-like family.

Its function is as follows. Displays ATPase and GTPase activities. This Dichelobacter nodosus (strain VCS1703A) protein is Nucleotide-binding protein DNO_0399.